Consider the following 243-residue polypeptide: Ubiquinone/menaquinone biosynthesis C-methyltransferase UbiE (243 aa).

S-adenosyl-L-methionine contacts are provided by residues Thr-69, Asp-90, and Asp-116–Ala-117.

It belongs to the class I-like SAM-binding methyltransferase superfamily. MenG/UbiE family.

It carries out the reaction a 2-demethylmenaquinol + S-adenosyl-L-methionine = a menaquinol + S-adenosyl-L-homocysteine + H(+). The catalysed reaction is a 2-methoxy-6-(all-trans-polyprenyl)benzene-1,4-diol + S-adenosyl-L-methionine = a 5-methoxy-2-methyl-3-(all-trans-polyprenyl)benzene-1,4-diol + S-adenosyl-L-homocysteine + H(+). It functions in the pathway quinol/quinone metabolism; menaquinone biosynthesis; menaquinol from 1,4-dihydroxy-2-naphthoate: step 2/2. It participates in cofactor biosynthesis; ubiquinone biosynthesis. Functionally, methyltransferase required for the conversion of demethylmenaquinol (DMKH2) to menaquinol (MKH2) and the conversion of 2-polyprenyl-6-methoxy-1,4-benzoquinol (DDMQH2) to 2-polyprenyl-3-methyl-6-methoxy-1,4-benzoquinol (DMQH2). The protein is Ubiquinone/menaquinone biosynthesis C-methyltransferase UbiE of Burkholderia mallei (strain NCTC 10247).